Consider the following 355-residue polypeptide: DNA polymerase IV (355 aa).

The region spanning 7–188 (IIHIDMDCFY…LPVRKLFGVG (182 aa)) is the UmuC domain. D11 and D106 together coordinate Mg(2+). The active site involves E107.

The protein belongs to the DNA polymerase type-Y family. Monomer. It depends on Mg(2+) as a cofactor.

It localises to the cytoplasm. It catalyses the reaction DNA(n) + a 2'-deoxyribonucleoside 5'-triphosphate = DNA(n+1) + diphosphate. Poorly processive, error-prone DNA polymerase involved in untargeted mutagenesis. Copies undamaged DNA at stalled replication forks, which arise in vivo from mismatched or misaligned primer ends. These misaligned primers can be extended by PolIV. Exhibits no 3'-5' exonuclease (proofreading) activity. May be involved in translesional synthesis, in conjunction with the beta clamp from PolIII. The chain is DNA polymerase IV from Legionella pneumophila subsp. pneumophila (strain Philadelphia 1 / ATCC 33152 / DSM 7513).